Here is a 615-residue protein sequence, read N- to C-terminus: Aspartokinase (615 aa).

2 disordered regions span residues 84-105 (ALQP…GTAT) and 127-171 (SSVS…SISQ). Composition is skewed to low complexity over residues 90–102 (SSSG…SMSG) and 127–164 (SSVS…ATPS). Residues 467-537 (IHSNRKTLSH…EVTVSKDMAI (71 aa)) enclose the ACT domain.

The protein belongs to the aspartokinase family.

The enzyme catalyses L-aspartate + ATP = 4-phospho-L-aspartate + ADP. The protein operates within amino-acid biosynthesis; L-methionine biosynthesis via de novo pathway; L-homoserine from L-aspartate: step 1/3. It functions in the pathway amino-acid biosynthesis; L-threonine biosynthesis; L-threonine from L-aspartate: step 1/5. In terms of biological role, phosphorylates aspartate, the first step in the biosynthesis of amino acids that derive from aspartate (the aspartate family of amino acids), including methioinine and threonine, the latter of which is a precursor to isoleucine. The chain is Aspartokinase from Cryptococcus neoformans var. grubii serotype A (strain H99 / ATCC 208821 / CBS 10515 / FGSC 9487) (Filobasidiella neoformans var. grubii).